We begin with the raw amino-acid sequence, 514 residues long: Putative thymidine phosphorylase (514 aa).

Belongs to the thymidine/pyrimidine-nucleoside phosphorylase family. Type 2 subfamily.

The enzyme catalyses thymidine + phosphate = 2-deoxy-alpha-D-ribose 1-phosphate + thymine. In Rhodopseudomonas palustris (strain ATCC BAA-98 / CGA009), this protein is Putative thymidine phosphorylase.